An 85-amino-acid polypeptide reads, in one-letter code: MPMVTRRLRDPDINPCLSESDASTRCMDENNYDRERCSSYFLKYKNCRRFWNSVMIQRRQNGVQPSMPTAAERDEILGAMQKMPY.

The 43-residue stretch at 13 to 55 (INPCLSESDASTRCMDENNYDRERCSSYFLKYKNCRRFWNSVM) folds into the CHCH domain. 2 consecutive short sequence motifs (cx9C motif) follow at residues 16–26 (CLSESDASTRC) and 37–47 (CSSYFLKYKNC). Disulfide bonds link Cys-16–Cys-47 and Cys-26–Cys-37.

It belongs to the CHCHD7 family. In terms of assembly, monomer.

Its subcellular location is the mitochondrion intermembrane space. The sequence is that of Coiled-coil-helix-coiled-coil-helix domain-containing protein 7 (Chchd7) from Mus musculus (Mouse).